We begin with the raw amino-acid sequence, 463 residues long: Dipeptidyl peptidase 1 (463 aa).

The first 24 residues, 1–24, serve as a signal peptide directing secretion; that stretch reads MGVGPASLLAALLLLLSGDRAVRC. N-linked (GlcNAc...) asparagine glycosylation is found at Asn29, Asn53, and Asn119. 5 disulfides stabilise this stretch: Cys30–Cys118, Cys54–Cys136, Cys255–Cys298, Cys291–Cys331, and Cys321–Cys337. Positions 135 to 230 are excised as a propeptide; sequence ACFTGKKVGT…TAEIQQKILH (96 aa). The active site involves Cys258. Asn276 carries N-linked (GlcNAc...) asparagine glycosylation. Residues Phe302 and Tyr304 each coordinate chloride. A chloride-binding site is contributed by Tyr347. Active-site residues include His405 and Asn427.

Belongs to the peptidase C1 family. Tetramer of heterotrimers consisting of exclusion domain, heavy- and light chains. It depends on chloride as a cofactor.

Its subcellular location is the lysosome. It carries out the reaction Release of an N-terminal dipeptide, Xaa-Yaa-|-Zaa-, except when Xaa is Arg or Lys, or Yaa or Zaa is Pro.. In terms of biological role, thiol protease. Has dipeptidylpeptidase activity. Active against a broad range of dipeptide substrates composed of both polar and hydrophobic amino acids. Proline cannot occupy the P1 position and arginine cannot occupy the P2 position of the substrate. Can act as both an exopeptidase and endopeptidase. Activates serine proteases such as elastase, cathepsin G and granzymes A and B. The chain is Dipeptidyl peptidase 1 (CTSC) from Macaca fascicularis (Crab-eating macaque).